The following is a 102-amino-acid chain: Turripeptide OL55-like (102 aa).

In terms of processing, contains 8 disulfide bonds. As to expression, expressed by the venom duct.

The protein resides in the secreted. Acts as a neurotoxin by inhibiting an ion channel. The chain is Turripeptide OL55-like from Lophiotoma acuta (Marbled turris).